We begin with the raw amino-acid sequence, 280 residues long: Succinate dehydrogenase [ubiquinone] iron-sulfur subunit, mitochondrial (280 aa).

The transit peptide at 1–28 (MAAVVAVSLKRWFPATTLGGACLQACRG) directs the protein to the mitochondrion. The 2Fe-2S ferredoxin-type domain occupies 40–131 (KKFAIYRWDP…DKVSKIYPLP (92 aa)). An N6-acetyllysine mark is found at Lys51 and Lys55. [2Fe-2S] cluster is bound by residues Cys93, Cys98, Cys101, and Cys113. Positions 146–218 (FYAQYKSIEP…PAVLMQAYRW (73 aa)) are interaction with SDHAF1. The 4Fe-4S ferredoxin-type domain occupies 176 to 206 (EREKLDGLYECILCACCSTSCPSYWWNGDKY). The [4Fe-4S] cluster site is built by Cys186, Cys189, and Cys192. Position 196 (Cys196) interacts with [3Fe-4S] cluster. Trp201 provides a ligand contact to a ubiquinone. Positions 243 and 249 each coordinate [3Fe-4S] cluster. Cys253 contributes to the [4Fe-4S] cluster binding site.

The protein belongs to the succinate dehydrogenase/fumarate reductase iron-sulfur protein family. As to quaternary structure, component of complex II composed of four subunits: the flavoprotein (FP) SDHA, iron-sulfur protein (IP) SDHB, and a cytochrome b560 composed of SDHC and SDHD. Interacts with SDHAF1; the interaction is required for iron-sulfur cluster incorporation into SDHB. It depends on [2Fe-2S] cluster as a cofactor. The cofactor is [3Fe-4S] cluster. Requires [4Fe-4S] cluster as cofactor.

Its subcellular location is the mitochondrion inner membrane. The enzyme catalyses a quinone + succinate = fumarate + a quinol. It catalyses the reaction (R)-malate + a quinone = enol-oxaloacetate + a quinol. It carries out the reaction (S)-malate + a quinone = enol-oxaloacetate + a quinol. Its pathway is carbohydrate metabolism; tricarboxylic acid cycle; fumarate from succinate (eukaryal route): step 1/1. Its activity is regulated as follows. Enol-oxaloacetate inhibits the succinate dehydrogenase activity. In terms of biological role, iron-sulfur protein (IP) subunit of the succinate dehydrogenase complex (mitochondrial respiratory chain complex II), responsible for transferring electrons from succinate to ubiquinone (coenzyme Q). SDH also oxidizes malate to the non-canonical enol form of oxaloacetate, enol-oxaloacetate. Enol-oxaloacetate, which is a potent inhibitor of the succinate dehydrogenase activity, is further isomerized into keto-oxaloacetate. The polypeptide is Succinate dehydrogenase [ubiquinone] iron-sulfur subunit, mitochondrial (SDHB) (Sus scrofa (Pig)).